Here is a 206-residue protein sequence, read N- to C-terminus: Large ribosomal subunit protein uL4 (206 aa).

Residues A43 to S78 are disordered. Over residues K49 to H58 the composition is skewed to basic and acidic residues. Over residues T59–G70 the composition is skewed to basic residues.

This sequence belongs to the universal ribosomal protein uL4 family. As to quaternary structure, part of the 50S ribosomal subunit.

One of the primary rRNA binding proteins, this protein initially binds near the 5'-end of the 23S rRNA. It is important during the early stages of 50S assembly. It makes multiple contacts with different domains of the 23S rRNA in the assembled 50S subunit and ribosome. Functionally, forms part of the polypeptide exit tunnel. This chain is Large ribosomal subunit protein uL4, found in Herminiimonas arsenicoxydans.